The following is a 210-amino-acid chain: Thiamine-phosphate synthase (210 aa).

4-amino-2-methyl-5-(diphosphooxymethyl)pyrimidine contacts are provided by residues glutamine 36–lysine 40 and asparagine 68. Mg(2+) contacts are provided by aspartate 69 and aspartate 88. Serine 107 contacts 4-amino-2-methyl-5-(diphosphooxymethyl)pyrimidine. Threonine 133–serine 135 provides a ligand contact to 2-[(2R,5Z)-2-carboxy-4-methylthiazol-5(2H)-ylidene]ethyl phosphate. Lysine 136 lines the 4-amino-2-methyl-5-(diphosphooxymethyl)pyrimidine pocket. 2-[(2R,5Z)-2-carboxy-4-methylthiazol-5(2H)-ylidene]ethyl phosphate contacts are provided by residues glycine 164 and isoleucine 184–serine 185.

Belongs to the thiamine-phosphate synthase family. The cofactor is Mg(2+).

The enzyme catalyses 2-[(2R,5Z)-2-carboxy-4-methylthiazol-5(2H)-ylidene]ethyl phosphate + 4-amino-2-methyl-5-(diphosphooxymethyl)pyrimidine + 2 H(+) = thiamine phosphate + CO2 + diphosphate. It carries out the reaction 2-(2-carboxy-4-methylthiazol-5-yl)ethyl phosphate + 4-amino-2-methyl-5-(diphosphooxymethyl)pyrimidine + 2 H(+) = thiamine phosphate + CO2 + diphosphate. It catalyses the reaction 4-methyl-5-(2-phosphooxyethyl)-thiazole + 4-amino-2-methyl-5-(diphosphooxymethyl)pyrimidine + H(+) = thiamine phosphate + diphosphate. Its pathway is cofactor biosynthesis; thiamine diphosphate biosynthesis; thiamine phosphate from 4-amino-2-methyl-5-diphosphomethylpyrimidine and 4-methyl-5-(2-phosphoethyl)-thiazole: step 1/1. Its function is as follows. Condenses 4-methyl-5-(beta-hydroxyethyl)thiazole monophosphate (THZ-P) and 2-methyl-4-amino-5-hydroxymethyl pyrimidine pyrophosphate (HMP-PP) to form thiamine monophosphate (TMP). This Moorella thermoacetica (strain ATCC 39073 / JCM 9320) protein is Thiamine-phosphate synthase.